We begin with the raw amino-acid sequence, 136 residues long: Small ribosomal subunit protein uS9 (136 aa).

The protein belongs to the universal ribosomal protein uS9 family.

The chain is Small ribosomal subunit protein uS9 from Borrelia recurrentis (strain A1).